The sequence spans 60 residues: Toxin 4.9.6 (60 aa).

Intrachain disulfides connect Cys-3-Cys-22, Cys-17-Cys-38, Cys-40-Cys-52, and Cys-53-Cys-58.

It belongs to the three-finger toxin family. Short-chain subfamily. Orphan group XI sub-subfamily. Expressed by the venom gland.

Its subcellular location is the secreted. The sequence is that of Toxin 4.9.6 from Dendroaspis viridis (Western green mamba).